A 276-amino-acid chain; its full sequence is UPF0328 protein ECU01_0090/ECU01_1520/ECU02_1550/ECU08_0020 (276 aa).

The segment at Met-1–His-24 is disordered.

This sequence belongs to the UPF0328 family.

The protein is UPF0328 protein ECU01_0090/ECU01_1520/ECU02_1550/ECU08_0020 of Encephalitozoon cuniculi (strain GB-M1) (Microsporidian parasite).